Reading from the N-terminus, the 180-residue chain is Cell division protein ZapC (180 aa).

Belongs to the ZapC family. Interacts directly with FtsZ.

The protein localises to the cytoplasm. In terms of biological role, contributes to the efficiency of the cell division process by stabilizing the polymeric form of the cell division protein FtsZ. Acts by promoting interactions between FtsZ protofilaments and suppressing the GTPase activity of FtsZ. In Vibrio vulnificus (strain CMCP6), this protein is Cell division protein ZapC.